The following is a 262-amino-acid chain: tRNA pseudouridine synthase A (262 aa).

Aspartate 51 (nucleophile) is an active-site residue. Substrate is bound at residue tyrosine 106.

This sequence belongs to the tRNA pseudouridine synthase TruA family.

The catalysed reaction is uridine(38/39/40) in tRNA = pseudouridine(38/39/40) in tRNA. Formation of pseudouridine at positions 38, 39 and 40 in the anticodon stem and loop of transfer RNAs. This chain is tRNA pseudouridine synthase A, found in Pyrococcus horikoshii (strain ATCC 700860 / DSM 12428 / JCM 9974 / NBRC 100139 / OT-3).